The sequence spans 382 residues: Gap junction alpha-1 protein (382 aa).

Topologically, residues 2–23 (GDWSALGKLLDKVQAYSTAGGK) are cytoplasmic. S5 is modified (phosphoserine). A helical transmembrane segment spans residues 24–44 (VWLSVLFIFRILLLGTAVESA). Residues 45 to 76 (WGDEQSAFRCNTQQPGCENVCYDKSFPISHVR) lie on the Extracellular side of the membrane. 2 cysteine pairs are disulfide-bonded: C54–C192 and C187–C198. Residues 77–97 (FWVLQIIFVSVPTLLYLAHVF) form a helical membrane-spanning segment. Residues 98–155 (YVMRKEEKLNKKEEELKVAQTDGVNVEMHLKQIEIKKFKYGIEEHGKVKMRGGLLRTY) lie on the Cytoplasmic side of the membrane. K144 is covalently cross-linked (Glycyl lysine isopeptide (Lys-Gly) (interchain with G-Cter in SUMO)). A helical membrane pass occupies residues 156–176 (IISILFKSVFEVAFLLIQWYI). At 177–207 (YGFSLSAVYTCKRDPCPHQVDCFLSRPTEKT) the chain is on the extracellular side. A helical transmembrane segment spans residues 208–228 (IFIIFMLVVSLVSLALNIIEL). Residues 229–382 (FYVFFKGVKD…SRPRPDDLEI (154 aa)) lie on the Cytoplasmic side of the membrane. K237 participates in a covalent cross-link: Glycyl lysine isopeptide (Lys-Gly) (interchain with G-Cter in SUMO). Residues 244 to 382 (SDPYHATTGP…SRPRPDDLEI (139 aa)) form an interaction with NOV region. Position 247 is a phosphotyrosine (Y247). S255, S257, and S262 each carry phosphoserine. The interval 264-382 (KYAYFNGCSS…SRPRPDDLEI (119 aa)) is interaction with UBQLN4. C271 carries the S-nitrosocysteine modification. Residue T275 is modified to Phosphothreonine. 3 positions are modified to phosphoserine: S306, S314, and S325. The segment covering 317–332 (QNRMGQAGSTISNSHA) has biased composition (polar residues). A disordered region spans residues 317-382 (QNRMGQAGST…SRPRPDDLEI (66 aa)). A Phosphothreonine modification is found at T326. Phosphoserine occurs at positions 328, 330, 341, and 365. The segment covering 362–374 (RPSSRASSRASSR) has biased composition (low complexity). S368 carries the post-translational modification Phosphoserine; by PKC/PRKCG and PKC/PRKCD. 2 positions are modified to phosphoserine: S369 and S373.

It belongs to the connexin family. Alpha-type (group II) subfamily. As to quaternary structure, a connexon is composed of a hexamer of connexins. Interacts with CSNK1D. Interacts with RIC1/CIP150. Interacts (via C-terminus) with TJP1. Interacts (via C-terminus) with SRC (via SH3 domain). Interacts (not ubiquitinated) with UBQLN4 (via UBA domain). Interacts with CNST. Interacts with SGSM3. Interacts with NOV. Interacts with TMEM65. Interacts with ANK3/ANKG and PKP2. Post-translationally, phosphorylation at Ser-325, Ser-328 and Ser-330 by CK1 modulates gap junction assembly. Phosphorylated at Ser-368 by PRKCG; phosphorylation induces disassembly of gap junction plaques and inhibition of gap junction activity. Phosphorylation at Ser-368 by PRKCD triggers its internalization into small vesicles leading to proteasome-mediated degradation. Sumoylated with SUMO1, SUMO2 and SUMO3, which may regulate the level of functional Cx43 gap junctions at the plasma membrane. May be desumoylated by SENP1 or SENP2. In terms of processing, acetylated in the developing cortex; leading to delocalization from the cell membrane. Post-translationally, S-nitrosylation at Cys-271 is enriched at the muscle endothelial gap junction in arteries, it augments channel permeability and may regulate of smooth muscle cell to endothelial cell communication. Expressed in heart, non-sensory epithelial cells, and in fibrocytes of the spiral ligament and the spiral limbus. Expressed in bladder smooth muscle cells (at protein level). Expressed in astrocytes (at protein level).

The protein localises to the cell membrane. Its subcellular location is the cell junction. The protein resides in the gap junction. It is found in the endoplasmic reticulum. Functionally, gap junction protein that acts as a regulator of bladder capacity. A gap junction consists of a cluster of closely packed pairs of transmembrane channels, the connexons, through which materials of low MW diffuse from one cell to a neighboring cell. Negative regulator of bladder functional capacity: acts by enhancing intercellular electrical and chemical transmission, thus sensitizing bladder muscles to cholinergic neural stimuli and causing them to contract. May play a role in cell growth inhibition through the regulation of NOV expression and localization. Plays an essential role in gap junction communication in the ventricles. Its function is as follows. Connexin 43 is possibly the ATP-induced pore of mouse macrophages. The chain is Gap junction alpha-1 protein (Gja1) from Mus musculus (Mouse).